The primary structure comprises 37 residues: L-amino-acid oxidase (37 aa).

Belongs to the flavin monoamine oxidase family. FIG1 subfamily. Homodimer; non-covalently linked. FAD serves as cofactor. N-Glycosylated. As to expression, expressed by the venom gland.

It localises to the secreted. It catalyses the reaction an L-alpha-amino acid + O2 + H2O = a 2-oxocarboxylate + H2O2 + NH4(+). The enzyme catalyses L-leucine + O2 + H2O = 4-methyl-2-oxopentanoate + H2O2 + NH4(+). The catalysed reaction is L-phenylalanine + O2 + H2O = 3-phenylpyruvate + H2O2 + NH4(+). It carries out the reaction L-tryptophan + O2 + H2O = indole-3-pyruvate + H2O2 + NH4(+). It catalyses the reaction L-methionine + O2 + H2O = 4-methylsulfanyl-2-oxobutanoate + H2O2 + NH4(+). The enzyme catalyses L-isoleucine + O2 + H2O = (S)-3-methyl-2-oxopentanoate + H2O2 + NH4(+). The catalysed reaction is L-arginine + O2 + H2O = 5-guanidino-2-oxopentanoate + H2O2 + NH4(+). It carries out the reaction L-histidine + O2 + H2O = 3-(imidazol-5-yl)pyruvate + H2O2 + NH4(+). It catalyses the reaction L-valine + O2 + H2O = 3-methyl-2-oxobutanoate + H2O2 + NH4(+). Its function is as follows. Catalyzes an oxidative deamination of predominantly hydrophobic and aromatic L-amino acids, thus producing hydrogen peroxide that may contribute to the diverse toxic effects of this enzyme. Is highly active on L-Leu, L-Met, moderately active on L-Arg, L-Trp, L-Phe, L-Val, L-His, and L-Ile, and is weakly or not active on L-Cys, L-Lys, L-Ala, L-Thr, L-Asp, L-Ser, and L-Pro. Exhibits diverse biological activities, such as hemorrhage, edema, apoptosis of vascular endothelial cells or tumor cell lines, as well as regulation of platelet aggregation. Effects of snake L-amino oxidases on platelets are controversial, since they either induce aggregation or inhibit agonist-induced aggregation. These different effects are probably due to different experimental conditions. This protein induce hemolysis and has antibacterial and antiparasitic activities (against the Gram-positive S.aureus). Tested in vivo, this protein significantly inhibits Ehrlich ascite tumors growth and induces an influx of polymorphonuclear cells, as well as spontaneous liberation of hydrogen peroxide from peritoneal macrophages. The chain is L-amino-acid oxidase from Bothrops jararaca (Jararaca).